The following is a 291-amino-acid chain: Protease HtpX (291 aa).

The next 2 helical transmembrane spans lie at 4–24 (IALF…VLNI) and 36–56 (LSGL…ISLM). Position 143 (histidine 143) interacts with Zn(2+). Glutamate 144 is an active-site residue. Position 147 (histidine 147) interacts with Zn(2+). 2 consecutive transmembrane segments (helical) span residues 151 to 171 (GDMI…IFLS) and 199 to 219 (FIVS…LTMW). Residue glutamate 225 coordinates Zn(2+).

Belongs to the peptidase M48B family. Requires Zn(2+) as cofactor.

Its subcellular location is the cell inner membrane. The sequence is that of Protease HtpX from Aliivibrio fischeri (strain ATCC 700601 / ES114) (Vibrio fischeri).